Reading from the N-terminus, the 349-residue chain is Protein-glutamate methylesterase/protein-glutamine glutaminase 3 (349 aa).

The Response regulatory domain occupies 2–119 (DVLIVDDSPV…HPDFERDVES (118 aa)). Asp52 carries the post-translational modification 4-aspartylphosphate. Positions 157 to 340 (EGFQPGVIAI…LSPPRIAALL (184 aa)) constitute a CheB-type methylesterase domain. Residues Ser169, His196, and Asp289 contribute to the active site.

It belongs to the CheB family. Phosphorylated by CheA. Phosphorylation of the N-terminal regulatory domain activates the methylesterase activity.

It is found in the cytoplasm. The catalysed reaction is [protein]-L-glutamate 5-O-methyl ester + H2O = L-glutamyl-[protein] + methanol + H(+). It carries out the reaction L-glutaminyl-[protein] + H2O = L-glutamyl-[protein] + NH4(+). Involved in chemotaxis. Part of a chemotaxis signal transduction system that modulates chemotaxis in response to various stimuli. Catalyzes the demethylation of specific methylglutamate residues introduced into the chemoreceptors (methyl-accepting chemotaxis proteins or MCP) by CheR. Also mediates the irreversible deamidation of specific glutamine residues to glutamic acid. The polypeptide is Protein-glutamate methylesterase/protein-glutamine glutaminase 3 (Hahella chejuensis (strain KCTC 2396)).